A 173-amino-acid polypeptide reads, in one-letter code: 2-C-methyl-D-erythritol 2,4-cyclodiphosphate synthase (173 aa).

2 residues coordinate a divalent metal cation: D17 and H19. 4-CDP-2-C-methyl-D-erythritol 2-phosphate-binding positions include 17–19 and 49–50; these read DVH and HS. H57 is an a divalent metal cation binding site. 4-CDP-2-C-methyl-D-erythritol 2-phosphate-binding positions include 76–80, 147–150, and R157; these read FPNTD and TTTE.

This sequence belongs to the IspF family. As to quaternary structure, homotrimer. A divalent metal cation is required as a cofactor.

It catalyses the reaction 4-CDP-2-C-methyl-D-erythritol 2-phosphate = 2-C-methyl-D-erythritol 2,4-cyclic diphosphate + CMP. It functions in the pathway isoprenoid biosynthesis; isopentenyl diphosphate biosynthesis via DXP pathway; isopentenyl diphosphate from 1-deoxy-D-xylulose 5-phosphate: step 4/6. In terms of biological role, involved in the biosynthesis of isopentenyl diphosphate (IPP) and dimethylallyl diphosphate (DMAPP), two major building blocks of isoprenoid compounds. Catalyzes the conversion of 4-diphosphocytidyl-2-C-methyl-D-erythritol 2-phosphate (CDP-ME2P) to 2-C-methyl-D-erythritol 2,4-cyclodiphosphate (ME-CPP) with a corresponding release of cytidine 5-monophosphate (CMP). The polypeptide is 2-C-methyl-D-erythritol 2,4-cyclodiphosphate synthase (Ehrlichia ruminantium (strain Welgevonden)).